Reading from the N-terminus, the 391-residue chain is Elongation factor Tu (391 aa).

The tr-type G domain maps to 10 to 201 (KPHVNIGTIG…AVDEYIPTPA (192 aa)). A G1 region spans residues 19-26 (GHVDHGKT). Residue 19 to 26 (GHVDHGKT) coordinates GTP. Position 26 (Thr26) interacts with Mg(2+). Positions 55–59 (GITIS) are G2. Residues 76-79 (DCPG) form a G3 region. GTP contacts are provided by residues 76–80 (DCPGH) and 131–134 (NKVD). The segment at 131–134 (NKVD) is G4. The tract at residues 169–171 (SAL) is G5.

It belongs to the TRAFAC class translation factor GTPase superfamily. Classic translation factor GTPase family. EF-Tu/EF-1A subfamily. As to quaternary structure, monomer.

It localises to the cytoplasm. The catalysed reaction is GTP + H2O = GDP + phosphate + H(+). Functionally, GTP hydrolase that promotes the GTP-dependent binding of aminoacyl-tRNA to the A-site of ribosomes during protein biosynthesis. The polypeptide is Elongation factor Tu (Cereibacter sphaeroides (strain ATCC 17025 / ATH 2.4.3) (Rhodobacter sphaeroides)).